Here is a 454-residue protein sequence, read N- to C-terminus: Tubulin beta-3 chain (454 aa).

GTP contacts are provided by Gln11, Glu75, Ser144, Gly148, Thr149, Gly150, Asn210, and Asn232. Glu75 provides a ligand contact to Mg(2+). A disordered region spans residues Thr435–Ile454.

The protein belongs to the tubulin family. As to quaternary structure, dimer of alpha and beta chains. A typical microtubule is a hollow water-filled tube with an outer diameter of 25 nm and an inner diameter of 15 nM. Alpha-beta heterodimers associate head-to-tail to form protofilaments running lengthwise along the microtubule wall with the beta-tubulin subunit facing the microtubule plus end conferring a structural polarity. Microtubules usually have 13 protofilaments but different protofilament numbers can be found in some organisms and specialized cells. Mg(2+) serves as cofactor.

It is found in the cytoplasm. It localises to the cytoskeleton. In terms of biological role, tubulin is the major constituent of microtubules, a cylinder consisting of laterally associated linear protofilaments composed of alpha- and beta-tubulin heterodimers. Microtubules grow by the addition of GTP-tubulin dimers to the microtubule end, where a stabilizing cap forms. Below the cap, tubulin dimers are in GDP-bound state, owing to GTPase activity of alpha-tubulin. The chain is Tubulin beta-3 chain (betaTub60D) from Drosophila melanogaster (Fruit fly).